Consider the following 72-residue polypeptide: MSKDDCIEFEGTVSETLPNTTFRIKLESGHEVTAHISGRMRKNYIRILTGDRVKIEMTAYDLTKGRIIYRMK.

Positions 1 to 72 (MSKDDCIEFE…TKGRIIYRMK (72 aa)) constitute an S1-like domain.

The protein belongs to the IF-1 family. Component of the 30S ribosomal translation pre-initiation complex which assembles on the 30S ribosome in the order IF-2 and IF-3, IF-1 and N-formylmethionyl-tRNA(fMet); mRNA recruitment can occur at any time during PIC assembly.

It localises to the cytoplasm. Functionally, one of the essential components for the initiation of protein synthesis. Stabilizes the binding of IF-2 and IF-3 on the 30S subunit to which N-formylmethionyl-tRNA(fMet) subsequently binds. Helps modulate mRNA selection, yielding the 30S pre-initiation complex (PIC). Upon addition of the 50S ribosomal subunit IF-1, IF-2 and IF-3 are released leaving the mature 70S translation initiation complex. The chain is Translation initiation factor IF-1 from Xylella fastidiosa (strain Temecula1 / ATCC 700964).